The primary structure comprises 242 residues: Biosynthetic peptidoglycan transglycosylase (242 aa).

Residues 21–41 (VALVVFWGGGIALFSVVPVPF) form a helical membrane-spanning segment.

Belongs to the glycosyltransferase 51 family.

It is found in the cell inner membrane. The catalysed reaction is [GlcNAc-(1-&gt;4)-Mur2Ac(oyl-L-Ala-gamma-D-Glu-L-Lys-D-Ala-D-Ala)](n)-di-trans,octa-cis-undecaprenyl diphosphate + beta-D-GlcNAc-(1-&gt;4)-Mur2Ac(oyl-L-Ala-gamma-D-Glu-L-Lys-D-Ala-D-Ala)-di-trans,octa-cis-undecaprenyl diphosphate = [GlcNAc-(1-&gt;4)-Mur2Ac(oyl-L-Ala-gamma-D-Glu-L-Lys-D-Ala-D-Ala)](n+1)-di-trans,octa-cis-undecaprenyl diphosphate + di-trans,octa-cis-undecaprenyl diphosphate + H(+). It functions in the pathway cell wall biogenesis; peptidoglycan biosynthesis. Peptidoglycan polymerase that catalyzes glycan chain elongation from lipid-linked precursors. This chain is Biosynthetic peptidoglycan transglycosylase, found in Salmonella arizonae (strain ATCC BAA-731 / CDC346-86 / RSK2980).